The primary structure comprises 490 residues: 2,3-bisphosphoglycerate-independent phosphoglycerate mutase (490 aa).

2 residues coordinate Mn(2+): D9 and S59. S59 functions as the Phosphoserine intermediate in the catalytic mechanism. Substrate-binding positions include H116, 145–146 (RD), R175, R181, 246–249 (RSDR), and K319. Mn(2+)-binding residues include D385, H389, D426, H427, and H444.

The protein belongs to the BPG-independent phosphoglycerate mutase family. As to quaternary structure, monomer. Mn(2+) serves as cofactor.

The catalysed reaction is (2R)-2-phosphoglycerate = (2R)-3-phosphoglycerate. It participates in carbohydrate degradation; glycolysis; pyruvate from D-glyceraldehyde 3-phosphate: step 3/5. In terms of biological role, catalyzes the interconversion of 2-phosphoglycerate and 3-phosphoglycerate. The polypeptide is 2,3-bisphosphoglycerate-independent phosphoglycerate mutase (Helicobacter hepaticus (strain ATCC 51449 / 3B1)).